Consider the following 154-residue polypeptide: Protein X (154 aa).

A disordered region spans residues 28–50; the sequence is RPLPGPLGAVPPSSPSAVPADDG. The span at 33-48 shows a compositional bias: low complexity; the sequence is PLGAVPPSSPSAVPAD. Residues 68 to 117 are mitochondrial targeting sequence; sequence PCALRFTSARRMETTVNAPWSLPTVLHKRTLGLSGWSMTWIEEYIKDCVF.

It belongs to the orthohepadnavirus protein X family. May form homodimer. May interact with host CEBPA, CFLAR, CREB1, DDB1, E4F1, HBXIP, HSPD1/HSP60, NFKBIA, POLR2E and SMAD4. Interacts with host SMC5-SMC6 complex and induces its degradation. Interacts with host TRPC4AP; leading to prevent ubiquitination of TRPC4AP. Interacts with host PLSCR1; this interaction promotes ubiquitination and degradation of HBx and impairs HBx-mediated cell proliferation. In terms of processing, a fraction may be phosphorylated in insect cells and HepG2 cells, a human hepatoblastoma cell line. Phosphorylated in vitro by host protein kinase C or mitogen-activated protein kinase. N-acetylated in insect cells.

The protein localises to the host cytoplasm. It is found in the host nucleus. Its subcellular location is the host mitochondrion. Multifunctional protein that plays a role in silencing host antiviral defenses and promoting viral transcription. Does not seem to be essential for HBV infection. May be directly involved in development of cirrhosis and liver cancer (hepatocellular carcinoma). Most of cytosolic activities involve modulation of cytosolic calcium. The effect on apoptosis is controversial depending on the cell types in which the studies have been conducted. May induce apoptosis by localizing in mitochondria and causing loss of mitochondrial membrane potential. May also modulate apoptosis by binding host CFLAR, a key regulator of the death-inducing signaling complex (DISC). Promotes viral transcription by using the host E3 ubiquitin ligase DDB1 to target the SMC5-SMC6 complex to proteasomal degradation. This host complex would otherwise bind to viral episomal DNA, and prevents its transcription. Moderately stimulates transcription of many different viral and cellular transcription elements. Promoters and enhancers stimulated by HBx contain DNA binding sites for NF-kappa-B, AP-1, AP-2, c-EBP, ATF/CREB, or the calcium-activated factor NF-AT. This is Protein X from Homo sapiens (Human).